We begin with the raw amino-acid sequence, 386 residues long: Protein RecA (386 aa).

Position 76 to 83 (glycine 76 to threonine 83) interacts with ATP. The segment at phenylalanine 362–asparagine 386 is disordered.

Belongs to the RecA family.

Its subcellular location is the cytoplasm. In terms of biological role, can catalyze the hydrolysis of ATP in the presence of single-stranded DNA, the ATP-dependent uptake of single-stranded DNA by duplex DNA, and the ATP-dependent hybridization of homologous single-stranded DNAs. It interacts with LexA causing its activation and leading to its autocatalytic cleavage. The polypeptide is Protein RecA (Corynebacterium efficiens (strain DSM 44549 / YS-314 / AJ 12310 / JCM 11189 / NBRC 100395)).